Reading from the N-terminus, the 24-residue chain is Sperm protamine P3 (24 aa).

The segment at arginine 1–arginine 24 is disordered.

As to expression, testis.

The protein resides in the nucleus. Its subcellular location is the chromosome. Functionally, protamines substitute for histones in the chromatin of sperm during the haploid phase of spermatogenesis. They compact sperm DNA into a highly condensed, stable and inactive complex. The protein is Sperm protamine P3 of Octopus vulgaris (Common octopus).